The following is a 104-amino-acid chain: UPF0145 protein cbdbA1711 (104 aa).

Belongs to the UPF0145 family.

The polypeptide is UPF0145 protein cbdbA1711 (Dehalococcoides mccartyi (strain CBDB1)).